The primary structure comprises 348 residues: Phospho-2-dehydro-3-deoxyheptonate aldolase, Trp-sensitive (348 aa).

Belongs to the class-I DAHP synthase family.

It carries out the reaction D-erythrose 4-phosphate + phosphoenolpyruvate + H2O = 7-phospho-2-dehydro-3-deoxy-D-arabino-heptonate + phosphate. It participates in metabolic intermediate biosynthesis; chorismate biosynthesis; chorismate from D-erythrose 4-phosphate and phosphoenolpyruvate: step 1/7. In terms of biological role, stereospecific condensation of phosphoenolpyruvate (PEP) and D-erythrose-4-phosphate (E4P) giving rise to 3-deoxy-D-arabino-heptulosonate-7-phosphate (DAHP). The sequence is that of Phospho-2-dehydro-3-deoxyheptonate aldolase, Trp-sensitive (aroH) from Enterobacter agglomerans (Erwinia herbicola).